A 733-amino-acid polypeptide reads, in one-letter code: Hypermethylated in cancer 1 protein (733 aa).

In terms of domain architecture, BTB spans 47–110; the sequence is CDVIIVVQNA…IYTGRLTDSV (64 aa). A mediates HDAC-dependent transcriptional repression region spans residues 154–315; that stretch reads KYCHLRGGGS…PFRGSGGSPG (162 aa). Arg-159 carries the post-translational modification Omega-N-methylarginine. Residues 189 to 209 form a disordered region; sequence YSSPAGPPPPPAAEPPSGPDA. Pro residues predominate over residues 193–206; that stretch reads AGPPPPPAAEPPSG. Ser-237 is modified (phosphoserine). The tract at residues 241–247 is interaction with CTBP1; that stretch reads GLDLSKK. The tract at residues 241 to 421 is disordered; it reads GLDLSKKSPP…PGGHLEGYPC (181 aa). Ser-248 is subject to Phosphoserine. Residue Lys-333 is modified to N6-acetyllysine; alternate. Lys-333 participates in a covalent cross-link: Glycyl lysine isopeptide (Lys-Gly) (interchain with G-Cter in SUMO); alternate. Over residues 344–361 the composition is skewed to basic and acidic residues; sequence ELVRDRGSPGERLEERGG. Position 366 is a phosphoserine (Ser-366). Over residues 368–380 the composition is skewed to pro residues; that stretch reads GGPPLGLVPPPRY. 5 C2H2-type zinc fingers span residues 437–464, 507–534, 535–562, 563–590, and 591–618; these read YVCI…EEEE, YRCA…LTRP, YPCT…GLKP, FACD…GEKP, and YECQ…VGGA. Position 704 is a phosphoserine (Ser-704).

This sequence belongs to the krueppel C2H2-type zinc-finger protein family. Hic subfamily. As to quaternary structure, self-associates. Interacts with HIC2. Interacts with CTBP1 and CTBP2. Interacts with TCF7L2 and ARID1A. Interacts with MTA1 and MBD3; indicative for an association with the NuRD complex. Interacts with SIRT1. Acetylated on several residues, including Lys-333. Lys-333 is deacetylated by SIRT1. Post-translationally, sumoylated on Lys-333 by a PIAS family member, which enhances interaction with MTA1, positively regulates transcriptional repression activity and is enhanced by HDAC4. As to expression, ubiquitously expressed with highest levels in heart and lung.

The protein localises to the nucleus. Functionally, transcriptional repressor. Recognizes and binds to the consensus sequence '5-[CG]NG[CG]GGGCA[CA]CC-3'. May act as a tumor suppressor. Involved in development of head, face, limbs and ventral body wall. Involved in down-regulation of SIRT1 and thereby is involved in regulation of p53/TP53-dependent apoptotic DNA-damage responses. The specific target gene promoter association seems to be depend on corepressors, such as CTBP1 or CTBP2 and MTA1. In cooperation with MTA1 (indicative for an association with the NuRD complex) represses transcription from CCND1/cyclin-D1 and CDKN1C/p57Kip2 specifically in quiescent cells. Involved in regulation of the Wnt signaling pathway probably by association with TCF7L2 and preventing TCF7L2 and CTNNB1 association with promoters of TCF-responsive genes. Seems to repress transcription from E2F1 and ATOH1 which involves ARID1A, indicative for the participation of a distinct SWI/SNF-type chromatin-remodeling complex. Probably represses transcription from ACKR3, FGFBP1 and EFNA1. The protein is Hypermethylated in cancer 1 protein (Hic1) of Mus musculus (Mouse).